Here is a 626-residue protein sequence, read N- to C-terminus: Probable metalloendopeptidase G1-type (626 aa).

Residue histidine 42 coordinates Zn(2+). Glutamate 45 is a catalytic residue. Residue histidine 46 participates in Zn(2+) binding.

This sequence belongs to the peptidase M44 family. The cofactor is Zn(2+).

Functionally, seems to be involved in viral proteins maturation by cleavage at Ala-Gly-|-Xaa motifs. The protein is Probable metalloendopeptidase G1-type of Fowlpox virus (strain NVSL) (FPV).